Consider the following 179-residue polypeptide: Adenine phosphoribosyltransferase (179 aa).

This sequence belongs to the purine/pyrimidine phosphoribosyltransferase family. In terms of assembly, homodimer.

The protein resides in the cytoplasm. It carries out the reaction AMP + diphosphate = 5-phospho-alpha-D-ribose 1-diphosphate + adenine. Its pathway is purine metabolism; AMP biosynthesis via salvage pathway; AMP from adenine: step 1/1. Its function is as follows. Catalyzes a salvage reaction resulting in the formation of AMP, that is energically less costly than de novo synthesis. In Bradyrhizobium sp. (strain ORS 278), this protein is Adenine phosphoribosyltransferase.